Consider the following 211-residue polypeptide: Tudor-interacting repair regulator protein (211 aa).

Glycyl lysine isopeptide (Lys-Gly) (interchain with G-Cter in ubiquitin) cross-links involve residues Lys10 and Lys151. Positions 118-205 are interaction with PXN; that stretch reads TLEQLHAVEI…TEKQKKALEK (88 aa).

Belongs to the Nudix hydrolase family. TIRR subfamily. In terms of assembly, homodimer. Interacts with TP53BP1 (via the Tudor-like domain); interaction is abolished following DNA damage and TP53BP1 phosphorylation by ATM. Interacts (via the cytoplasmic part) with SDC4. Interacts with TGFB1I1 and PXN.

The protein localises to the nucleus. Its function is as follows. Key regulator of TP53BP1 required to stabilize TP53BP1 and regulate its recruitment to chromatin. In absence of DNA damage, interacts with the tandem Tudor-like domain of TP53BP1, masking the region that binds histone H4 dimethylated at 'Lys-20' (H4K20me2), thereby preventing TP53BP1 recruitment to chromatin and maintaining TP53BP1 localization to the nucleus. Following DNA damage, ATM-induced phosphorylation of TP53BP1 and subsequent recruitment of RIF1 leads to dissociate NUDT16L1/TIRR from TP53BP1, unmasking the tandem Tudor-like domain and allowing recruitment of TP53BP1 to DNA double strand breaks (DSBs). Binds U8 snoRNA. The chain is Tudor-interacting repair regulator protein from Mus musculus (Mouse).